A 106-amino-acid chain; its full sequence is ATP-dependent Clp protease adapter protein ClpS (106 aa).

This sequence belongs to the ClpS family. In terms of assembly, binds to the N-terminal domain of the chaperone ClpA.

Functionally, involved in the modulation of the specificity of the ClpAP-mediated ATP-dependent protein degradation. The protein is ATP-dependent Clp protease adapter protein ClpS of Serratia proteamaculans (strain 568).